The primary structure comprises 652 residues: DNA ligase (652 aa).

Residues 29–33 (DSEYD), 78–79 (SL), and Glu-107 each bind NAD(+). Lys-109 acts as the N6-AMP-lysine intermediate in catalysis. NAD(+) contacts are provided by Arg-130, Glu-164, Lys-278, and Lys-302. Zn(2+)-binding residues include Cys-395, Cys-398, Cys-413, and Cys-418. Positions 577-652 (DRQAELFGLT…IEDEDWLLNL (76 aa)) constitute a BRCT domain.

The protein belongs to the NAD-dependent DNA ligase family. LigA subfamily. Mg(2+) is required as a cofactor. Requires Mn(2+) as cofactor.

The enzyme catalyses NAD(+) + (deoxyribonucleotide)n-3'-hydroxyl + 5'-phospho-(deoxyribonucleotide)m = (deoxyribonucleotide)n+m + AMP + beta-nicotinamide D-nucleotide.. Functionally, DNA ligase that catalyzes the formation of phosphodiester linkages between 5'-phosphoryl and 3'-hydroxyl groups in double-stranded DNA using NAD as a coenzyme and as the energy source for the reaction. It is essential for DNA replication and repair of damaged DNA. This Streptococcus equi subsp. zooepidemicus (strain MGCS10565) protein is DNA ligase.